A 334-amino-acid chain; its full sequence is Cathepsin K (334 aa).

Residues 1-19 (MLRLHWLALLVLLLPMAAA) form the signal peptide. A propeptide spans 20–119 (QLRPEPELDA…TLYVPDWSSR (100 aa)) (activation peptide). N-linked (GlcNAc...) asparagine glycosylation occurs at asparagine 108. 3 disulfide bridges follow: cysteine 141/cysteine 182, cysteine 175/cysteine 215, and cysteine 274/cysteine 323. Cysteine 144 is an active-site residue. Residues histidine 281 and asparagine 301 contribute to the active site.

This sequence belongs to the peptidase C1 family.

The enzyme catalyses Broad proteolytic activity. With small-molecule substrates and inhibitors, the major determinant of specificity is P2, which is preferably Leu, Met &gt; Phe, and not Arg.. Its function is as follows. Closely involved in osteoclastic bone resorption and may participate partially in the disorder of bone remodeling. Displays potent endoprotease activity against fibrinogen at acid pH. May play an important role in extracellular matrix degradation. This is Cathepsin K (CTSK) from Gallus gallus (Chicken).